Consider the following 214-residue polypeptide: Dual specificity phosphatase 29 (214 aa).

The Tyrosine-protein phosphatase domain occupies 46-194 (HVNEVWPNLY…LRELDIELAL (149 aa)). 138–145 (HCAMGRSR) contributes to the substrate binding site. Cys139 serves as the catalytic Phosphocysteine intermediate.

It belongs to the protein-tyrosine phosphatase family. Non-receptor class dual specificity subfamily.

The protein localises to the cytoplasm. It is found in the nucleus. The catalysed reaction is O-phospho-L-tyrosyl-[protein] + H2O = L-tyrosyl-[protein] + phosphate. The enzyme catalyses O-phospho-L-seryl-[protein] + H2O = L-seryl-[protein] + phosphate. It carries out the reaction O-phospho-L-threonyl-[protein] + H2O = L-threonyl-[protein] + phosphate. In terms of biological role, dual specificity phosphatase able to dephosphorylate phosphotyrosine, phosphoserine and phosphothreonine residues within the same substrate, with a preference for phosphotyrosine as a substrate. Involved in the modulation of AMPK and MAPK1/2 signaling pathways. This is Dual specificity phosphatase 29 (DUSP29) from Gallus gallus (Chicken).